The primary structure comprises 325 residues: Probable tRNA pseudouridine synthase B (325 aa).

Asp71 serves as the catalytic Nucleophile. The PUA domain maps to 238-313 (LPKIYVKDSA…VAASIERVIM (76 aa)).

This sequence belongs to the pseudouridine synthase TruB family. Type 2 subfamily.

It catalyses the reaction uridine(55) in tRNA = pseudouridine(55) in tRNA. In terms of biological role, could be responsible for synthesis of pseudouridine from uracil-55 in the psi GC loop of transfer RNAs. In Korarchaeum cryptofilum (strain OPF8), this protein is Probable tRNA pseudouridine synthase B.